Reading from the N-terminus, the 135-residue chain is ATP synthase epsilon chain (135 aa).

It belongs to the ATPase epsilon chain family. F-type ATPases have 2 components, CF(1) - the catalytic core - and CF(0) - the membrane proton channel. CF(1) has five subunits: alpha(3), beta(3), gamma(1), delta(1), epsilon(1). CF(0) has three main subunits: a, b and c.

It localises to the cell inner membrane. In terms of biological role, produces ATP from ADP in the presence of a proton gradient across the membrane. The protein is ATP synthase epsilon chain of Rhizobium rhizogenes (strain K84 / ATCC BAA-868) (Agrobacterium radiobacter).